The following is a 329-amino-acid chain: DNA-directed RNA polymerase subunit alpha (329 aa).

Positions methionine 1 to arginine 235 are alpha N-terminal domain (alpha-NTD). The segment at phenylalanine 249–glutamate 329 is alpha C-terminal domain (alpha-CTD).

The protein belongs to the RNA polymerase alpha chain family. Homodimer. The RNAP catalytic core consists of 2 alpha, 1 beta, 1 beta' and 1 omega subunit. When a sigma factor is associated with the core the holoenzyme is formed, which can initiate transcription.

It carries out the reaction RNA(n) + a ribonucleoside 5'-triphosphate = RNA(n+1) + diphosphate. In terms of biological role, DNA-dependent RNA polymerase catalyzes the transcription of DNA into RNA using the four ribonucleoside triphosphates as substrates. This Enterobacter sp. (strain 638) protein is DNA-directed RNA polymerase subunit alpha.